A 51-amino-acid polypeptide reads, in one-letter code: Small ribosomal subunit protein uS14 (51 aa).

Residues cysteine 16, cysteine 19, cysteine 34, and cysteine 37 each contribute to the Zn(2+) site.

The protein belongs to the universal ribosomal protein uS14 family. Zinc-binding uS14 subfamily. As to quaternary structure, part of the 30S ribosomal subunit. Zn(2+) serves as cofactor.

Functionally, binds 16S rRNA, required for the assembly of 30S particles. This is Small ribosomal subunit protein uS14 from Archaeoglobus fulgidus (strain ATCC 49558 / DSM 4304 / JCM 9628 / NBRC 100126 / VC-16).